A 605-amino-acid chain; its full sequence is Formin-binding protein 1-like (605 aa).

Residues 1 to 263 form the F-BAR domain; it reads MSWGTELWDQ…AAKSVDERRD (263 aa). Residues 66-258 are a coiled coil; the sequence is FTSCIAFFNI…EGMILAAKSV (193 aa). Positions 245–535 are interaction with CDC42; the sequence is SKCLEGMILA…EFDDEFEDDD (291 aa). At S295 the chain carries Phosphoserine. Residues 392–484 are a coiled coil; that stretch reads LEDFSHLPPE…VEGKTGIRGD (93 aa). One can recognise an REM-1 domain in the interval 397-474; sequence HLPPEQRRKK…IHKNEAWLSE (78 aa). The interval 482 to 538 is disordered; the sequence is RGDRRHSSDINHLVTQGRESPEGSYTDDANQEVRGPPQQHGHHSEFDDEFEDDDPLP. A phosphoserine mark is found at S488, S501, and S505. The interval 522-605 is interaction with DNM1; it reads GHHSEFDDEF…VTLEKSSKGS (84 aa). Residues 527–536 show a composition bias toward acidic residues; that stretch reads FDDEFEDDDP. The 62-residue stretch at 538–599 folds into the SH3 domain; sequence PAIGHCKAIY…PTTYIDVTLE (62 aa). The interaction with DNM2 and WASL stretch occupies residues 541 to 597; that stretch reads GHCKAIYPFDGHNEGTLAMKEGEVLYIIEEDKGDGWTRARRQNGEEGYVPTTYIDVT. Residues 541–605 are interaction with DAAM1, DIAPH1 and DIAPH2; it reads GHCKAIYPFD…VTLEKSSKGS (65 aa).

Belongs to the FNBP1 family. In terms of assembly, homodimerizes, the dimers can polymerize end-to-end to form filamentous structures. Interacts with GTP-bound CDC42. Interacts with DAAM1, DIAPH1, DIAPH2, DNM1, DNM2 and WASL/N-WASP. Interacts with ATG3. Interacts (via SH3 domain) with ABI1, WASF2, CDC42 and WIPF1.

Its subcellular location is the cytoplasm. The protein resides in the cytoskeleton. The protein localises to the cell cortex. It localises to the cytoplasmic vesicle. It is found in the cell membrane. Required to coordinate membrane tubulation with reorganization of the actin cytoskeleton during endocytosis. May bind to lipids such as phosphatidylinositol 4,5-bisphosphate and phosphatidylserine and promote membrane invagination and the formation of tubules. Also promotes CDC42-induced actin polymerization by activating the WASL-WASPIP complex, the predominant form of WASL/N-WASP in cells. Actin polymerization may promote the fission of membrane tubules to form endocytic vesicles. Essential for autophagy of intracellular bacterial pathogens. This chain is Formin-binding protein 1-like (Fnbp1l), found in Mus musculus (Mouse).